The chain runs to 487 residues: MISSKPRLVVPYGLKTLLEGISRAVLKTNPSDINQFAAAYFQELTMYRGNTTVDIKDLVKQFHQIKVEKWSEGTTPQKKLECLKEPEKTSVESKVPTQMEKSTDTDEDNVTRTEYSDKTTQFPSVYAEPGAEQTEAVGDSSSKPATPKATTPPSSPPPTAVSPEFAYVPADPAQLAAQMLGKVSSIHSDQSDVLMVDVATSMPVVIEEVPSSEAAEDVMVAAPLVCSGKVLEVQVVSQTSVHVDLGSQPKENEAEQSTASSVPLQDEQEPPAYDQAPEVTLQADIEVMSTVHISSVYNDVPVIEGVVYIEQLPEQIVTPFTDQVACLKENEQSPPVSPKSVVEKTTSGISKKSVESVELAQLEENAKYSSVYVEAEAAALLSDTSLKGQPEVPAQLLDAEGAVKIGSEKSLHLEVGITSIVSDNTGQEESGENSVPQEMEGKPVLSGEAAEAVHSGTSVKSSSGPFPPAPEGLTAPEIEPEGEATAE.

The RIIa domain maps to 12–49 (YGLKTLLEGISRAVLKTNPSDINQFAAAYFQELTMYRG). Composition is skewed to basic and acidic residues over residues 78–91 (KKLE…KTSV) and 101–117 (KSTD…EYSD). Disordered stretches follow at residues 78-163 (KKLE…AVSP), 243-271 (VDLG…QEPP), and 420-487 (IVSD…ATAE). Positions 140 to 152 (SSSKPATPKATTP) are enriched in low complexity. 2 stretches are compositionally biased toward polar residues: residues 420-436 (IVSD…NSVP) and 455-464 (SGTSVKSSSG). Residues 478 to 487 (IEPEGEATAE) are compositionally biased toward acidic residues.

Interacts with FSCB. In terms of processing, phosphorylated on tyrosine residues during in vitro capacitation. Dephosphorylation affects its ability to bind calcium.

The protein localises to the cytoplasm. The protein resides in the cytoskeleton. Its subcellular location is the cell projection. It is found in the cilium. It localises to the flagellum. In terms of biological role, may function as a regulator of both motility- and head-associated functions such as capacitation and the acrosome reaction. May bind calcium in vitro. This is Calcium-binding tyrosine phosphorylation-regulated protein (CABYR) from Macaca fascicularis (Crab-eating macaque).